The primary structure comprises 262 residues: uncharacterized protein (262 aa).

Positions Leu6–Val70 constitute an S4 RNA-binding domain. The Nucleophile role is filled by Asp108.

It belongs to the pseudouridine synthase RsuA family.

It carries out the reaction a uridine in RNA = a pseudouridine in RNA. This is an uncharacterized protein from Helicobacter pylori (strain J99 / ATCC 700824) (Campylobacter pylori J99).